The primary structure comprises 548 residues: ATP synthase subunit alpha (548 aa).

Position 172 to 179 (172 to 179) interacts with ATP; the sequence is GDRKTGKT.

It belongs to the ATPase alpha/beta chains family. F-type ATPases have 2 components, CF(1) - the catalytic core - and CF(0) - the membrane proton channel. CF(1) has five subunits: alpha(3), beta(3), gamma(1), delta(1), epsilon(1). CF(0) has three main subunits: a(1), b(2) and c(9-12). The alpha and beta chains form an alternating ring which encloses part of the gamma chain. CF(1) is attached to CF(0) by a central stalk formed by the gamma and epsilon chains, while a peripheral stalk is formed by the delta and b chains.

It is found in the cell membrane. It catalyses the reaction ATP + H2O + 4 H(+)(in) = ADP + phosphate + 5 H(+)(out). Functionally, produces ATP from ADP in the presence of a proton gradient across the membrane. The alpha chain is a regulatory subunit. In Mycolicibacterium smegmatis (strain ATCC 700084 / mc(2)155) (Mycobacterium smegmatis), this protein is ATP synthase subunit alpha.